A 280-amino-acid chain; its full sequence is Adenosylcobinamide-GDP ribazoletransferase (280 aa).

Helical transmembrane passes span 44–64 (GVGVLVGALVAAFTALLLFVL), 69–89 (STPLVAAALGTALGVLLTGAF), 111–131 (LVIMKDSRVGAFGAIAVMLAL), 135–155 (VALLALLGAVSATLMVAALFV), 189–209 (ISVAALLTGFIWCFMALALVI), and 226–246 (ALLQALLSAVVASCVAWAVMA).

It belongs to the CobS family. Mg(2+) is required as a cofactor.

Its subcellular location is the cell inner membrane. The catalysed reaction is alpha-ribazole + adenosylcob(III)inamide-GDP = adenosylcob(III)alamin + GMP + H(+). The enzyme catalyses alpha-ribazole 5'-phosphate + adenosylcob(III)inamide-GDP = adenosylcob(III)alamin 5'-phosphate + GMP + H(+). It functions in the pathway cofactor biosynthesis; adenosylcobalamin biosynthesis; adenosylcobalamin from cob(II)yrinate a,c-diamide: step 7/7. Its function is as follows. Joins adenosylcobinamide-GDP and alpha-ribazole to generate adenosylcobalamin (Ado-cobalamin). Also synthesizes adenosylcobalamin 5'-phosphate from adenosylcobinamide-GDP and alpha-ribazole 5'-phosphate. The sequence is that of Adenosylcobinamide-GDP ribazoletransferase from Albidiferax ferrireducens (strain ATCC BAA-621 / DSM 15236 / T118) (Rhodoferax ferrireducens).